The following is a 449-amino-acid chain: Tripartite motif-containing protein 64B (449 aa).

The RING-type zinc finger occupies 15-56; it reads CCICVNYFIDPVTIDCGHSFCRPCLCLCSEEGRAPMRCPSCR. The B box-type zinc-finger motif lies at 87–128; it reads SSDNICVLHEETKELFCEADKRLLCGPCSESPEHMAHSHSPI. 4 residues coordinate Zn(2+): cysteine 92, histidine 95, cysteine 114, and histidine 120. Positions 189-225 form a coiled coil; the sequence is LDEEEQRHLQALEREAEELFQQLQDSQVRMTQHLERM. The region spanning 268-449 is the B30.2/SPRY domain; the sequence is ELTSWCITGV…LRPFFCFGCT (182 aa).

It belongs to the TRIM/RBCC family.

The sequence is that of Tripartite motif-containing protein 64B (TRIM64B) from Homo sapiens (Human).